We begin with the raw amino-acid sequence, 905 residues long: Isoleucine--tRNA ligase (905 aa).

A 'HIGH' region motif is present at residues 56–66 (PYANGNIHMGT). An L-isoleucyl-5'-AMP-binding site is contributed by Glu563. The 'KMSKS' region signature appears at 604 to 608 (KMSKS). Lys607 contacts ATP.

Belongs to the class-I aminoacyl-tRNA synthetase family. IleS type 1 subfamily. In terms of assembly, monomer.

It localises to the cytoplasm. The catalysed reaction is tRNA(Ile) + L-isoleucine + ATP = L-isoleucyl-tRNA(Ile) + AMP + diphosphate. Its function is as follows. Catalyzes the attachment of isoleucine to tRNA(Ile). As IleRS can inadvertently accommodate and process structurally similar amino acids such as valine, to avoid such errors it has two additional distinct tRNA(Ile)-dependent editing activities. One activity is designated as 'pretransfer' editing and involves the hydrolysis of activated Val-AMP. The other activity is designated 'posttransfer' editing and involves deacylation of mischarged Val-tRNA(Ile). In Pelagibacter ubique (strain HTCC1062), this protein is Isoleucine--tRNA ligase.